A 367-amino-acid chain; its full sequence is MTEIIKNTKYLDYTSDSVEFYPFNNNIFVCGTYEIEKGDTEYKERRKGKLYLFEIEEEQQQKENDNNNENNNNNKLFKEIQNINFNSGILDMKWNNNKDRILGVVMSKGELNIYQYDEVEKKLELKSSTEISLSNDILSLSLDWNKSGDKLICSFSDGNIGLFKVTKDYSKVTEEKRWKAHDYEAWICAFNYHDESIVFSGGDDCKFKIWDLNQLLNHNDDDIGIPPTPKFTKRCDMGVTSIHCHPTIENLIAVGSYDECLRIWDLKSLKQPIITTDSLGGGIWRIKWHPFQKNKLVTACMGGGFHILSTDPENINDFSTLQIEQSYNGPHKSIAYGVDWSFNKNNFDKQFIGCCSFYDKCLSIWIP.

4 WD repeats span residues 84–124, 132–173, 180–220, and 234–274; these read NFNS…KKLE, SLSN…SKVT, AHDY…NHND, and RCDM…QPII.

This sequence belongs to the DPH7 family.

It carries out the reaction diphthine methyl ester-[translation elongation factor 2] + H2O = diphthine-[translation elongation factor 2] + methanol + H(+). It functions in the pathway protein modification; peptidyl-diphthamide biosynthesis. Catalyzes the demethylation of diphthine methyl ester to form diphthine, an intermediate diphthamide biosynthesis, a post-translational modification of histidine which occurs in translation elongation factor 2 (efbA). The polypeptide is Diphthine methyltransferase homolog (wdr85) (Dictyostelium discoideum (Social amoeba)).